The sequence spans 124 residues: Urease subunit beta (124 aa).

Belongs to the urease beta subunit family. Heterotrimer of UreA (gamma), UreB (beta) and UreC (alpha) subunits. Three heterotrimers associate to form the active enzyme.

Its subcellular location is the cytoplasm. The enzyme catalyses urea + 2 H2O + H(+) = hydrogencarbonate + 2 NH4(+). It participates in nitrogen metabolism; urea degradation; CO(2) and NH(3) from urea (urease route): step 1/1. This Bacillus subtilis (strain 168) protein is Urease subunit beta.